Consider the following 317-residue polypeptide: uncharacterized protein (317 aa).

It to A.aeolicus AA11 and AA34.

This is an uncharacterized protein from Aquifex aeolicus (strain VF5).